The sequence spans 476 residues: tRNA (cytosine(72)-C(5))-methyltransferase NSUN6 (476 aa).

A PUA domain is found at 111–203; that stretch reads QGEVIVGAQC…IGIRMTEPIY (93 aa). S-adenosyl-L-methionine contacts are provided by residues 242–248, Asp266, Asp293, and Asp323; that span reads CAAPGGK. Residue Cys373 is the Nucleophile of the active site. Lys419 bears the N6-acetyllysine mark.

It belongs to the class I-like SAM-binding methyltransferase superfamily. RsmB/NOP family.

The protein localises to the cytoplasm. The catalysed reaction is cytidine(72) in tRNA(Thr) + S-adenosyl-L-methionine = 5-methylcytidine(72) in tRNA(Thr) + S-adenosyl-L-homocysteine + H(+). The enzyme catalyses cytidine(72) in tRNA(Cys) + S-adenosyl-L-methionine = 5-methylcytidine(72) in tRNA(Cys) + S-adenosyl-L-homocysteine + H(+). Its function is as follows. S-adenosyl-L-methionine-dependent methyltransferase that specifically methylates the C5 position of cytosine 72 in tRNA(Thr)(TGT) and tRNA(Cys)(GCA). In vitro also methylates tRNA(Thr)(AGT). Methylation requires, in the acceptor stem region, the presence of the 3'-CCA terminus, the target site C72, the discriminator base U73, and the second and third base pairs (2:71 and 3:70) in the tRNA substrates. In Mus musculus (Mouse), this protein is tRNA (cytosine(72)-C(5))-methyltransferase NSUN6.